A 275-amino-acid polypeptide reads, in one-letter code: Large ribosomal subunit protein uL2 (275 aa).

The disordered stretch occupies residues 224–275 (AMNPVDHPHGGGEAKAGQGNPHPVTPWGVPTKGYKTRKNKRTQQFIVRDRRG).

Belongs to the universal ribosomal protein uL2 family. As to quaternary structure, part of the 50S ribosomal subunit. Forms a bridge to the 30S subunit in the 70S ribosome.

One of the primary rRNA binding proteins. Required for association of the 30S and 50S subunits to form the 70S ribosome, for tRNA binding and peptide bond formation. It has been suggested to have peptidyltransferase activity; this is somewhat controversial. Makes several contacts with the 16S rRNA in the 70S ribosome. The polypeptide is Large ribosomal subunit protein uL2 (Xanthomonas oryzae pv. oryzae (strain MAFF 311018)).